Here is a 96-residue protein sequence, read N- to C-terminus: Phosphoribosyl-ATP pyrophosphatase (96 aa).

It belongs to the PRA-PH family.

Its subcellular location is the cytoplasm. It carries out the reaction 1-(5-phospho-beta-D-ribosyl)-ATP + H2O = 1-(5-phospho-beta-D-ribosyl)-5'-AMP + diphosphate + H(+). It participates in amino-acid biosynthesis; L-histidine biosynthesis; L-histidine from 5-phospho-alpha-D-ribose 1-diphosphate: step 2/9. This chain is Phosphoribosyl-ATP pyrophosphatase, found in Methanococcus maripaludis (strain DSM 14266 / JCM 13030 / NBRC 101832 / S2 / LL).